Here is a 308-residue protein sequence, read N- to C-terminus: Olfactory receptor 5H19 (308 aa).

At Met1–Phe27 the chain is on the extracellular side. N-linked (GlcNAc...) asparagine glycosylation is present at Asn4. The chain crosses the membrane as a helical span at residues Leu28–Ile48. Residues Trp49 to His55 lie on the Cytoplasmic side of the membrane. A helical transmembrane segment spans residues Ile56 to Val76. The Extracellular segment spans residues Val77–Thr92. A helical transmembrane segment spans residues Leu93–Leu113. A disulfide bond links Cys96 and Cys188. The Cytoplasmic segment spans residues Leu114–Leu143. Residues Ile144–Arg164 form a helical membrane-spanning segment. Topologically, residues Leu165 to Ile197 are extracellular. The chain crosses the membrane as a helical span at residues Val198–Thr218. The Cytoplasmic segment spans residues Ile219–Ser238. Residues Thr239–Val259 traverse the membrane as a helical segment. At His260–Asp270 the chain is on the extracellular side. Residues Met271–Leu291 form a helical membrane-spanning segment. Over Arg292 to Val308 the chain is Cytoplasmic.

This sequence belongs to the G-protein coupled receptor 1 family.

Its subcellular location is the cell membrane. Functionally, potential odorant receptor. This is Olfactory receptor 5H19 from Mus musculus (Mouse).